We begin with the raw amino-acid sequence, 257 residues long: Pimeloyl-[acyl-carrier protein] methyl ester esterase (257 aa).

The AB hydrolase-1 domain occupies 15–241 (HLVLLHGWGL…KAAHAPFVSH (227 aa)). Substrate is bound by residues tryptophan 22, 82 to 83 (SL), and 143 to 147 (FLALQ). Residue serine 82 is the Nucleophile of the active site. Residues aspartate 207 and histidine 235 contribute to the active site. Histidine 235 is a substrate binding site.

Belongs to the AB hydrolase superfamily. Carboxylesterase BioH family. As to quaternary structure, monomer.

It localises to the cytoplasm. The enzyme catalyses 6-carboxyhexanoyl-[ACP] methyl ester + H2O = 6-carboxyhexanoyl-[ACP] + methanol + H(+). The protein operates within cofactor biosynthesis; biotin biosynthesis. The physiological role of BioH is to remove the methyl group introduced by BioC when the pimeloyl moiety is complete. It allows to synthesize pimeloyl-ACP via the fatty acid synthetic pathway through the hydrolysis of the ester bonds of pimeloyl-ACP esters. The chain is Pimeloyl-[acyl-carrier protein] methyl ester esterase from Klebsiella pneumoniae subsp. pneumoniae (strain ATCC 700721 / MGH 78578).